The primary structure comprises 146 residues: 3-dehydroquinate dehydratase (146 aa).

The active-site Proton acceptor is the Y23. 3 residues coordinate substrate: N75, H81, and D88. The active-site Proton donor is the H101. Residues 102-103 (LS) and R112 each bind substrate.

The protein belongs to the type-II 3-dehydroquinase family. As to quaternary structure, homododecamer.

The catalysed reaction is 3-dehydroquinate = 3-dehydroshikimate + H2O. It functions in the pathway metabolic intermediate biosynthesis; chorismate biosynthesis; chorismate from D-erythrose 4-phosphate and phosphoenolpyruvate: step 3/7. Its function is as follows. Catalyzes a trans-dehydration via an enolate intermediate. The polypeptide is 3-dehydroquinate dehydratase (Marinobacter nauticus (strain ATCC 700491 / DSM 11845 / VT8) (Marinobacter aquaeolei)).